Reading from the N-terminus, the 140-residue chain is 3-hydroxyacyl-[acyl-carrier-protein] dehydratase FabZ (140 aa).

Residue H47 is part of the active site.

Belongs to the thioester dehydratase family. FabZ subfamily.

The protein localises to the cytoplasm. It carries out the reaction a (3R)-hydroxyacyl-[ACP] = a (2E)-enoyl-[ACP] + H2O. Involved in unsaturated fatty acids biosynthesis. Catalyzes the dehydration of short chain beta-hydroxyacyl-ACPs and long chain saturated and unsaturated beta-hydroxyacyl-ACPs. The sequence is that of 3-hydroxyacyl-[acyl-carrier-protein] dehydratase FabZ from Streptococcus mutans serotype c (strain ATCC 700610 / UA159).